The primary structure comprises 124 residues: Small ribosomal subunit protein uS13 (124 aa).

The tract at residues 95–124 is disordered; sequence GLPVRGQRTKTNARTRKGPKRTIAGKKKAK.

This sequence belongs to the universal ribosomal protein uS13 family. In terms of assembly, part of the 30S ribosomal subunit. Forms a loose heterodimer with protein S19. Forms two bridges to the 50S subunit in the 70S ribosome.

In terms of biological role, located at the top of the head of the 30S subunit, it contacts several helices of the 16S rRNA. In the 70S ribosome it contacts the 23S rRNA (bridge B1a) and protein L5 of the 50S subunit (bridge B1b), connecting the 2 subunits; these bridges are implicated in subunit movement. Contacts the tRNAs in the A and P-sites. This is Small ribosomal subunit protein uS13 from Rhodococcus erythropolis (strain PR4 / NBRC 100887).